The following is a 24-amino-acid chain: Cupiennin-5a (24 aa).

In terms of tissue distribution, expressed by the venom gland.

The protein resides in the secreted. In Cupiennius salei (American wandering spider), this protein is Cupiennin-5a.